Consider the following 312-residue polypeptide: Ribosomal protein L11 methyltransferase (312 aa).

S-adenosyl-L-methionine contacts are provided by T159, G180, D201, and N244.

This sequence belongs to the methyltransferase superfamily. PrmA family.

It localises to the cytoplasm. The enzyme catalyses L-lysyl-[protein] + 3 S-adenosyl-L-methionine = N(6),N(6),N(6)-trimethyl-L-lysyl-[protein] + 3 S-adenosyl-L-homocysteine + 3 H(+). Methylates ribosomal protein L11. This is Ribosomal protein L11 methyltransferase from Desulfitobacterium hafniense (strain DSM 10664 / DCB-2).